A 161-amino-acid polypeptide reads, in one-letter code: Peroxynitrite isomerase 2 (161 aa).

Residues 17–23 carry the GXWXGXG motif; sequence GTWTGRG. His152 provides a ligand contact to heme b.

The protein belongs to the nitrobindin family. As to quaternary structure, homodimer. The cofactor is heme b.

It catalyses the reaction peroxynitrite = nitrate. Its pathway is nitrogen metabolism. In terms of biological role, heme-binding protein able to scavenge peroxynitrite and to protect free L-tyrosine against peroxynitrite-mediated nitration, by acting as a peroxynitrite isomerase that converts peroxynitrite to nitrate. Therefore, this protein likely plays a role in peroxynitrite sensing and in the detoxification of reactive nitrogen and oxygen species (RNS and ROS, respectively). Is able to bind nitric oxide (NO) in vitro, but may act as a sensor of peroxynitrite levels in vivo. The polypeptide is Peroxynitrite isomerase 2 (Mycobacterium avium (strain 104)).